The chain runs to 297 residues: 33 kDa chaperonin (297 aa).

2 cysteine pairs are disulfide-bonded: Cys-233-Cys-235 and Cys-267-Cys-270.

The protein belongs to the HSP33 family. Under oxidizing conditions two disulfide bonds are formed involving the reactive cysteines. Under reducing conditions zinc is bound to the reactive cysteines and the protein is inactive.

It localises to the cytoplasm. Redox regulated molecular chaperone. Protects both thermally unfolding and oxidatively damaged proteins from irreversible aggregation. Plays an important role in the bacterial defense system toward oxidative stress. The protein is 33 kDa chaperonin of Haemophilus ducreyi (strain 35000HP / ATCC 700724).